The sequence spans 210 residues: Protein-L-isoaspartate O-methyltransferase (210 aa).

S52 is an active-site residue.

It belongs to the methyltransferase superfamily. L-isoaspartyl/D-aspartyl protein methyltransferase family.

The protein resides in the cytoplasm. It carries out the reaction [protein]-L-isoaspartate + S-adenosyl-L-methionine = [protein]-L-isoaspartate alpha-methyl ester + S-adenosyl-L-homocysteine. Functionally, catalyzes the methyl esterification of L-isoaspartyl residues in peptides and proteins that result from spontaneous decomposition of normal L-aspartyl and L-asparaginyl residues. It plays a role in the repair and/or degradation of damaged proteins. In Protochlamydia amoebophila (strain UWE25), this protein is Protein-L-isoaspartate O-methyltransferase.